Here is a 349-residue protein sequence, read N- to C-terminus: Protein AMBP (349 aa).

The N-terminal stretch at 1-19 is a signal peptide; that stretch reads MLGLGTLFLLLAACPASRA. Residue Asn35 is glycosylated (N-linked (GlcNAc...) asparagine). Residues Cys52 and Lys110 each contribute to the 3-hydroxy-L-kynurenine site. A disulfide bridge connects residues Cys90 and Cys187. A glycan (N-linked (GlcNAc...) asparagine) is linked at Asn114. 2 residues coordinate 3-hydroxy-L-kynurenine: Lys136 and Lys148. An O-linked (Xyl...) (chondroitin sulfate) serine glycan is attached at Ser214. Cystine bridges form between Cys230-Cys280, Cys239-Cys263, Cys255-Cys276, Cys286-Cys336, Cys295-Cys319, and Cys311-Cys332. 2 BPTI/Kunitz inhibitor domains span residues 230–280 and 286–336; these read CQLS…LQTC and CSLP…KEYC.

The protein in the N-terminal section; belongs to the calycin superfamily. Lipocalin family. Monomer. Homodimer. In plasma, it occurs as a monomer or dimer and in covalently-linked complexes with immunoglobulin A (IgA), ALB/albumin and F2/prothrombin. Chromophore-bound alpha-1-microglobulin interacts with the constant region of immunoglobulin A. Chromophore-bound alpha-1-microglobulin interacts with ALB with molar ratio 2:1 and 1:1; this interaction does not prevent fatty acid binding to ALB. Interacts with F2/prothrombin (via N-terminus) with molar ratio 2:1 and 1:1; this interaction does not prevent the activation of prothrombin to thrombin. Interacts with NDUFAB1, a subunit of mitochondrial complex I. Interacts with FN1. As to quaternary structure, I-alpha-I plasma protease inhibitors are assembled from one or two heavy chains (HC) and one light chain, bikunin. Inter-alpha-inhibitor (I-alpha-I) is composed of ITIH1/HC1, ITIH2/HC2 and bikunin, and pre-alpha-inhibitor (P-alpha-I) of ITIH3/HC3 and bikunin. Interacts with TNFAIP6 (via Link domain). In terms of assembly, monomer. Also occurs as a complex with tryptase in mast cells. The precursor is proteolytically processed into separately functioning proteins. In terms of processing, 3-hydroxykynurenine, an oxidized tryptophan metabolite that is common in biological fluids, reacts with Cys-53, Lys-111, Lys-137, and Lys-149 to form heterogeneous polycyclic chromophores including hydroxanthommatin. The reaction by alpha-1-microglobulin is autocatalytic; the human protein forms chromophore even when expressed in insect and bacterial cells. The chromophore can react with accessible cysteines forming non-reducible thioether cross-links with other molecules of alpha-1-microglobulin or with other proteins such as Ig alpha-1 chain C region 'Cys-352'. Post-translationally, heavy chains are interlinked with bikunin via a chondroitin 4-sulfate bridge to the C-terminal aspartate. Proteolytically cleaved by PRSS3 at Kunitz domain 2. In terms of tissue distribution, expressed by the liver and secreted in plasma.

The protein resides in the secreted. It is found in the endoplasmic reticulum. Its subcellular location is the cytoplasm. The protein localises to the cytosol. It localises to the cell membrane. The protein resides in the nucleus membrane. It is found in the mitochondrion inner membrane. Its subcellular location is the extracellular space. The protein localises to the extracellular matrix. Functionally, antioxidant and tissue repair protein with reductase, heme-binding and radical-scavenging activities. Removes and protects against harmful oxidants and repairs macromolecules in intravascular and extravascular spaces and in intracellular compartments. Intravascularly, plays a regulatory role in red cell homeostasis by preventing heme- and reactive oxygen species-induced cell damage. Binds and degrades free heme to protect fetal and adult red blood cells from hemolysis. Reduces extracellular methemoglobin, a Fe3+ (ferric) form of hemoglobin that cannot bind oxygen, back to the Fe2+ (ferrous) form deoxyhemoglobin, which has oxygen-carrying potential. Upon acute inflammation, inhibits oxidation of low-density lipoprotein particles by MPO and limits vascular damage. Extravascularly, protects from oxidation products formed on extracellular matrix structures and cell membranes. Catalyzes the reduction of carbonyl groups on oxidized collagen fibers and preserves cellular and extracellular matrix ultrastructures. Importantly, counteracts the oxidative damage at blood-placenta interface, preventing leakage of free fetal hemoglobin into the maternal circulation. Intracellularly, has a role in maintaining mitochondrial redox homeostasis. Bound to complex I of the respiratory chain of mitochondria, may scavenge free radicals and preserve mitochondrial ATP synthesis. Protects renal tubule epithelial cells from heme-induced oxidative damage to mitochondria. Reduces cytochrome c from Fe3+ (ferric) to the Fe2+ (ferrous) state through formation of superoxide anion radicals in the presence of ascorbate or NADH/NADPH electron donor cofactors, ascorbate being the preferred cofactor. Has a chaperone role in facilitating the correct folding of bikunin in the endoplasmic reticulum compartment. In terms of biological role, kunitz-type serine protease inhibitor and structural component of extracellular matrix with a role in extracellular space remodeling and cell adhesion. Among others, has antiprotease activity toward kallikrein, a protease involved in airway inflammation; inhibits GZMK/granzyme, a granule-stored serine protease involved in NK and T cell cytotoxic responses; and inhibits PLG/plasmin, a protease required for activation of matrix metalloproteinases. As part of I-alpha-I complex, provides for the heavy chains to be transferred from I-alpha-I complex to hyaluronan in the presence of TNFAIP6, in a dynamic process that releases free bikunin and remodels extracellular matrix proteoglycan structures. Free bikunin, but not its heavy chain-bound form, acts as a potent protease inhibitor in airway secretions. Part of hyaluronan-rich extracellular matrix that surrounds oocyte during cumulus oophorus expansion, an indispensable process for proper ovulation. Also inhibits calcium oxalate crystallization. Its function is as follows. Kunitz-type serine protease inhibitor. Has high catalytic efficiency for F10/blood coagulation factor Xa and may act as an anticoagulant by inhibiting prothrombin activation. Inhibits trypsin and mast cell CMA1/chymase and tryptase proteases. The polypeptide is Protein AMBP (AMBP) (Mesocricetus auratus (Golden hamster)).